Consider the following 160-residue polypeptide: MKLHELSDNDGAAKKRKRVGRGPGSGTGKMGGRGIKGQKSRSGVAIKGYEGGQMPLYQRLPKRGFNKPNRKAYAVVNLGLIQKFVDAGKIDASAAITEDALIASGLVRRKKDGIRVLAKGDVTGKLNIEVTGASKSAIEAVAKAGGSLTVTAPVAETSEA.

Over residues 1–13 (MKLHELSDNDGAA) the composition is skewed to basic and acidic residues. The tract at residues 1-42 (MKLHELSDNDGAAKKRKRVGRGPGSGTGKMGGRGIKGQKSRS) is disordered. A compositionally biased stretch (gly residues) spans 21 to 35 (RGPGSGTGKMGGRGI).

This sequence belongs to the universal ribosomal protein uL15 family. Part of the 50S ribosomal subunit.

Functionally, binds to the 23S rRNA. This Roseobacter denitrificans (strain ATCC 33942 / OCh 114) (Erythrobacter sp. (strain OCh 114)) protein is Large ribosomal subunit protein uL15.